A 473-amino-acid polypeptide reads, in one-letter code: uncharacterized protein (473 aa).

The N-terminal stretch at 1 to 35 is a signal peptide; sequence MLWAHCGRFLRYHLLPLLLCRLPFLLFFQRPQWAH. Disordered regions lie at residues 142–201, 232–254, and 331–437; these read QRRR…RRRH, RGRL…GGAG, and IIPP…MTTN. Residues 155-165 show a composition bias toward pro residues; sequence PSFPPPDPPSQ. Over residues 168–182 the composition is skewed to basic and acidic residues; that stretch reads EDARDADAERAESPH. The segment covering 243–254 has biased composition (gly residues); that stretch reads PNTGGPRPGGAG. Basic and acidic residues predominate over residues 341-397; that stretch reads QNEEPRQQLTGEETRNSTHTQREEVEDVSREGAREGNDGSRASGNDERRNNAGRYDD.

Belongs to the HHV-5 UL13 protein family. As to quaternary structure, interacts with host MICOS complex subunits IMMT and CHCHD3.

It localises to the host mitochondrion. Plays an essential role during infection by modulating mitochondrial ultrastructure and thereby increasing bioenergetic potential. Mechanistically, alters cristae architecture by interacting with components of the host mitochondrial contact site and cristae organizing system (MICOS) complex. This is an uncharacterized protein from Human cytomegalovirus (strain Merlin) (HHV-5).